The primary structure comprises 95 residues: Putative septation protein SpoVG (95 aa).

The protein belongs to the SpoVG family.

In terms of biological role, could be involved in septation. The sequence is that of Putative septation protein SpoVG from Brevibacillus brevis (strain 47 / JCM 6285 / NBRC 100599).